A 35-amino-acid polypeptide reads, in one-letter code: Photosystem II reaction center protein T (35 aa).

The chain crosses the membrane as a helical span at residues 3 to 23; it reads ALVYTFLLVSTLGIIFFAIFF.

It belongs to the PsbT family. In terms of assembly, PSII is composed of 1 copy each of membrane proteins PsbA, PsbB, PsbC, PsbD, PsbE, PsbF, PsbH, PsbI, PsbJ, PsbK, PsbL, PsbM, PsbT, PsbY, PsbZ, Psb30/Ycf12, at least 3 peripheral proteins of the oxygen-evolving complex and a large number of cofactors. It forms dimeric complexes.

The protein localises to the plastid. It localises to the chloroplast thylakoid membrane. Found at the monomer-monomer interface of the photosystem II (PS II) dimer, plays a role in assembly and dimerization of PSII. PSII is a light-driven water plastoquinone oxidoreductase, using light energy to abstract electrons from H(2)O, generating a proton gradient subsequently used for ATP formation. The chain is Photosystem II reaction center protein T from Gunnera chilensis (Chilean rhubarb).